We begin with the raw amino-acid sequence, 325 residues long: Cyclic AMP-responsive element-binding protein 1 (325 aa).

Composition is skewed to polar residues over residues 1 to 11 (MESGAENQQSG) and 18 to 27 (AESQQMTVQA). Disordered stretches follow at residues 1–27 (MESGAENQQSGDAAVTEAESQQMTVQA) and 92–111 (SEDSQESVDSVTDSQKRREI). Positions 85-144 (QISTIAESEDSQESVDSVTDSQKRREILSRRPSYRKILNDLSSDAPGVPRIEEEKSEEET) constitute a KID domain. S117 bears the Phosphoserine; by CaMK1, CaMK2, CaMK4, PKB/AKT1 or PKB/AKT2, RPS6KA3, RPS6KA4, RPS6KA5 and SGK1 mark. A Glycyl lysine isopeptide (Lys-Gly) (interchain with G-Cter in SUMO2) cross-link involves residue K120. The tract at residues 124–146 (DLSSDAPGVPRIEEEKSEEETSA) is disordered. S126 is modified (phosphoserine; by CaMK2). Position 255 is a phosphoserine; by HIPK2 (S255). Residues 267–325 (ARKREVRLMKNREAARECRRKKKEYVKCLENRVAVLENQNKTLIEELKALKDLYCHKSD) form the bZIP domain. The basic motif stretch occupies residues 268-293 (RKREVRLMKNREAARECRRKKKEYVK). Glycyl lysine isopeptide (Lys-Gly) (interchain with G-Cter in SUMO1) cross-links involve residues K269 and K288. The tract at residues 295-316 (LENRVAVLENQNKTLIEELKAL) is leucine-zipper.

Belongs to the bZIP family. As to quaternary structure, interacts with PPRC1. Binds DNA as a dimer. This dimer is stabilized by magnesium ions. Interacts, through the bZIP domain, with the coactivators CRTC1/TORC1, CRTC2/TORC2 and CRTC3/TORC3. When phosphorylated on Ser-117, binds CREBBP. Interacts with CREBL2; regulates CREB1 phosphorylation, stability and transcriptional activity. Interacts (phosphorylated form) with TOX3. Interacts with ARRB1. Binds to HIPK2. Interacts with SGK1. Interacts with TSSK4; this interaction facilitates phosphorylation on Ser-117. Forms a complex with KMT2A and CREBBP. Interacts with TOX4; CREB1 is required for full induction of TOX4-dependent activity and the interaction is increased by cAMP and inhibited by insulin. In terms of processing, sumoylated with SUMO1. Sumoylation on Lys-288, but not on Lys-269, is required for nuclear localization of this protein. Sumoylation is enhanced under hypoxia, promoting nuclear localization and stabilization. Stimulated by phosphorylation. Phosphorylation of both Ser-117 and Ser-126 in the SCN regulates the activity of CREB and participates in circadian rhythm generation. Phosphorylation of Ser-117 allows CREBBP binding. Phosphorylated upon calcium influx by CaMK4 and CaMK2 on Ser-117. CaMK4 is much more potent than CaMK2 in activating CREB. Phosphorylated by CaMK2 on Ser-126. Phosphorylation of Ser-126 blocks CREB-mediated transcription even when Ser-117 is phosphorylated. Phosphorylated by CaMK1. Phosphorylation of Ser-255 by HIPK2 in response to genotoxic stress promotes CREB1 activity, facilitating the recruitment of the coactivator CBP. Phosphorylated at Ser-117 by RPS6KA3, RPS6KA4 and RPS6KA5 in response to mitogenic or stress stimuli. CREBL2 positively regulates phosphorylation at Ser-117 thereby stimulating CREB1 transcriptional activity. In liver, phosphorylation is induced by fasting or glucagon in a circadian fashion. Phosphorylated by TSSK4 on Ser-117.

The protein resides in the nucleus. In terms of biological role, phosphorylation-dependent transcription factor that stimulates transcription upon binding to the DNA cAMP response element (CRE), a sequence present in many viral and cellular promoters. Transcription activation is enhanced by the TORC coactivators which act independently of Ser-117 phosphorylation. Involved in different cellular processes including the synchronization of circadian rhythmicity and the differentiation of adipose cells. Regulates the expression of apoptotic and inflammatory response factors in cardiomyocytes in response to ERFE-mediated activation of AKT signaling. This chain is Cyclic AMP-responsive element-binding protein 1 (CREB1), found in Bos taurus (Bovine).